Consider the following 217-residue polypeptide: 3-demethoxyubiquinol 3-hydroxylase (217 aa).

Residues glutamate 66, glutamate 96, histidine 99, glutamate 148, glutamate 180, and histidine 183 each coordinate Fe cation.

The protein belongs to the COQ7 family. The cofactor is Fe cation.

Its subcellular location is the cell membrane. It carries out the reaction a 5-methoxy-2-methyl-3-(all-trans-polyprenyl)benzene-1,4-diol + AH2 + O2 = a 3-demethylubiquinol + A + H2O. It functions in the pathway cofactor biosynthesis; ubiquinone biosynthesis. Catalyzes the hydroxylation of 2-nonaprenyl-3-methyl-6-methoxy-1,4-benzoquinol during ubiquinone biosynthesis. The polypeptide is 3-demethoxyubiquinol 3-hydroxylase (Xylella fastidiosa (strain Temecula1 / ATCC 700964)).